Reading from the N-terminus, the 255-residue chain is tRNA (guanine-N(7)-)-methyltransferase (255 aa).

Residues 1-21 (MMHDDPNEAGLPPHDDAIPDE) are disordered. S-adenosyl-L-methionine contacts are provided by Glu-86, Glu-111, Asp-138, and Asp-161. Asp-161 is a catalytic residue. Residues Lys-165, Asp-197, and 232-235 (TKFE) each bind substrate.

Belongs to the class I-like SAM-binding methyltransferase superfamily. TrmB family.

It catalyses the reaction guanosine(46) in tRNA + S-adenosyl-L-methionine = N(7)-methylguanosine(46) in tRNA + S-adenosyl-L-homocysteine. It functions in the pathway tRNA modification; N(7)-methylguanine-tRNA biosynthesis. Catalyzes the formation of N(7)-methylguanine at position 46 (m7G46) in tRNA. In Burkholderia lata (strain ATCC 17760 / DSM 23089 / LMG 22485 / NCIMB 9086 / R18194 / 383), this protein is tRNA (guanine-N(7)-)-methyltransferase.